The chain runs to 138 residues: Small ribosomal subunit protein uS11c (138 aa).

It belongs to the universal ribosomal protein uS11 family. As to quaternary structure, part of the 30S ribosomal subunit.

The protein localises to the plastid. It localises to the chloroplast. The protein is Small ribosomal subunit protein uS11c of Morus indica (Mulberry).